A 395-amino-acid chain; its full sequence is S-adenosylmethionine synthase (395 aa).

ATP is bound at residue His-15. Asp-17 contributes to the Mg(2+) binding site. Glu-43 is a binding site for K(+). Glu-56 and Gln-99 together coordinate L-methionine. Positions 99–109 are flexible loop; that stretch reads QSPEIAQGVDR. Residues 164-166, 230-231, Asp-239, 245-246, Ala-262, and Lys-266 each bind ATP; these read DAK, RF, and RK. Asp-239 is an L-methionine binding site. An L-methionine-binding site is contributed by Lys-270.

It belongs to the AdoMet synthase family. Homotetramer; dimer of dimers. Requires Mg(2+) as cofactor. K(+) serves as cofactor.

The protein localises to the cytoplasm. It carries out the reaction L-methionine + ATP + H2O = S-adenosyl-L-methionine + phosphate + diphosphate. It functions in the pathway amino-acid biosynthesis; S-adenosyl-L-methionine biosynthesis; S-adenosyl-L-methionine from L-methionine: step 1/1. Its function is as follows. Catalyzes the formation of S-adenosylmethionine (AdoMet) from methionine and ATP. The overall synthetic reaction is composed of two sequential steps, AdoMet formation and the subsequent tripolyphosphate hydrolysis which occurs prior to release of AdoMet from the enzyme. The protein is S-adenosylmethionine synthase of Colwellia psychrerythraea (strain 34H / ATCC BAA-681) (Vibrio psychroerythus).